The primary structure comprises 314 residues: MSSVIFLGTPNFGSVVLQGLIDQGYDVKAVVTQPDKRVGRKQVVHQSAVKQTALKHNLPVYQPAKLSGSDELAELMKIEPDFIVTAAYGQFLPTKFLKSAKIAPVNVHGSLLPKYRGGAPIQYSVLNGDKETGVTIMEMVKKMDAGDIFSQKALPIEDDDTSGTLFDKLSILGRDLLLETLPKFIDGTVTRTPQNEDKVVFSPNISKEQEQIKLTMTAEQANNLIRALNPDPGAYVMLDGKRFKIWKAKPLAEKTSFPAGTLVTNKKKFVISMAGGSELELLEVQPTGKKKMNIKDYLNGQGSHFTSGEKIIDE.

110 to 113 (SLLP) provides a ligand contact to (6S)-5,6,7,8-tetrahydrofolate.

Belongs to the Fmt family.

The catalysed reaction is L-methionyl-tRNA(fMet) + (6R)-10-formyltetrahydrofolate = N-formyl-L-methionyl-tRNA(fMet) + (6S)-5,6,7,8-tetrahydrofolate + H(+). Attaches a formyl group to the free amino group of methionyl-tRNA(fMet). The formyl group appears to play a dual role in the initiator identity of N-formylmethionyl-tRNA by promoting its recognition by IF2 and preventing the misappropriation of this tRNA by the elongation apparatus. The chain is Methionyl-tRNA formyltransferase from Lactobacillus gasseri (strain ATCC 33323 / DSM 20243 / BCRC 14619 / CIP 102991 / JCM 1131 / KCTC 3163 / NCIMB 11718 / NCTC 13722 / AM63).